Here is a 58-residue protein sequence, read N- to C-terminus: DNA-binding protein (58 aa).

Basic residues-rich tracts occupy residues 1 to 19 and 28 to 58; these read MVRR…RSRS and SRYR…NQYI. The segment at 1–58 is disordered; the sequence is MVRRRRSRSPYRRRSRSRSRSGSDRSRSRYRSRSRSRSRSRSRARSRSPYHHHINQYI.

In terms of processing, probably phosphorylated in infected cells.

It is found in the virion. Functionally, thought to be responsible for DNA condensation during packaging of the nucleocapsids. The polypeptide is DNA-binding protein (P7.3) (Cryptophlebia leucotreta granulosis virus (ClGV)).